We begin with the raw amino-acid sequence, 962 residues long: Oncostatin-M-specific receptor subunit beta (962 aa).

An N-terminal signal peptide occupies residues 1 to 28 (MAFSVVLHQVTFLLAVLSLRTSQSKVLG). Over 29–738 (EPLQLTPEIH…VTTPDVRSHM (710 aa)) the chain is Extracellular. Asn-219 is a glycosylation site (N-linked (GlcNAc...) asparagine). Fibronectin type-III domains are found at residues 237 to 332 (EPKN…VHPK), 333 to 426 (APHD…TPEA), 428 to 527 (PSEA…SGHE), 528 to 621 (EVHE…TQEL), and 623 to 734 (PSVN…TPDV). Cysteines 243 and 253 form a disulfide. Asn-324 is a glycosylation site (N-linked (GlcNAc...) asparagine). The short motif at 413 to 417 (WSDWM) is the WSXWS motif element. N-linked (GlcNAc...) asparagine glycosylation is found at Asn-492, Asn-578, and Asn-723. Residues 739 to 759 (LLQIILPMTLGVFLSIIVCYW) traverse the membrane as a helical segment. Residues 760-962 (KSQWVKEKCY…ASLKENNLTS (203 aa)) are Cytoplasmic-facing. Residues 768-776 (CYPDIPNPY) carry the Box 1 motif motif. Residues 818–840 (VGSGKLHTEDVPTKPPLVPTEKD) are disordered.

It belongs to the type I cytokine receptor family. Type 2 subfamily. As to quaternary structure, heterodimer composed of OSMR and IL6ST (type II OSM receptor). Heterodimer with IL31RA to form the IL31 receptor. In terms of tissue distribution, widely expressed. Expressed at high levels in the liver, skin and spleen. In the liver it is expressed exclusively in the oval cells.

The protein localises to the membrane. In terms of biological role, associates with IL31RA to form the IL31 receptor. Binds IL31 and activates STAT1, STAT3 and STAT5. Capable of transducing OSM-specific signaling events. The OSM/OSM-R system is pivotal in the differentiation of oval cells into hepatocytes, thereby promoting liver regeneration. The polypeptide is Oncostatin-M-specific receptor subunit beta (Osmr) (Rattus norvegicus (Rat)).